Reading from the N-terminus, the 282-residue chain is NADH-ubiquinone oxidoreductase chain 2 (282 aa).

Helical transmembrane passes span isoleucine 17 to isoleucine 37, serine 58 to leucine 78, phenylalanine 87 to phenylalanine 107, isoleucine 115 to cysteine 135, phenylalanine 166 to isoleucine 186, threonine 202 to leucine 222, and phenylalanine 232 to isoleucine 252.

The protein belongs to the complex I subunit 2 family.

The protein resides in the mitochondrion inner membrane. It catalyses the reaction a ubiquinone + NADH + 5 H(+)(in) = a ubiquinol + NAD(+) + 4 H(+)(out). Core subunit of the mitochondrial membrane respiratory chain NADH dehydrogenase (Complex I) that is believed to belong to the minimal assembly required for catalysis. Complex I functions in the transfer of electrons from NADH to the respiratory chain. The immediate electron acceptor for the enzyme is believed to be ubiquinone. This Caenorhabditis elegans protein is NADH-ubiquinone oxidoreductase chain 2.